The sequence spans 65 residues: MEVNMPTTEQGQKNKQMIPSPGPGGGSGPGPQAPKVEKPNTEEILKRMRKVDPDQARRYRQRTGE.

Polar residues predominate over residues 1 to 17; it reads MEVNMPTTEQGQKNKQM. The segment at 1-65 is disordered; it reads MEVNMPTTEQ…ARRYRQRTGE (65 aa). The segment covering 35 to 65 has biased composition (basic and acidic residues); it reads KVEKPNTEEILKRMRKVDPDQARRYRQRTGE. Glutamate 65 is covalently cross-linked (Isoglutamyl lysine isopeptide (Glu-Lys) (interchain with K-? in acceptor proteins)).

The protein belongs to the ubiquitin-like protein UBact family.

In terms of biological role, may function as a protein modifier covalently attached to lysine residues of substrate proteins. This may serve to target the modified proteins for degradation by proteasomes. The chain is Prokaryotic ubiquitin-like protein UBact from Methylacidiphilum infernorum (isolate V4) (Methylokorus infernorum (strain V4)).